A 331-amino-acid polypeptide reads, in one-letter code: Holliday junction branch migration complex subunit RuvB (331 aa).

The tract at residues 4–182 (KDILQSSECI…FGIPMHLEFY (179 aa)) is large ATPase domain (RuvB-L). ATP is bound by residues arginine 22, glycine 63, lysine 66, threonine 67, threonine 68, 129-131 (EDF), arginine 172, tyrosine 182, and arginine 219. Position 67 (threonine 67) interacts with Mg(2+). A small ATPAse domain (RuvB-S) region spans residues 183 to 253 (STEELTKVIK…FADQALLRLG (71 aa)). The head domain (RuvB-H) stretch occupies residues 256-331 (KLGLDRQDIK…SYLNEQTYNM (76 aa)). DNA-binding residues include arginine 309 and arginine 314.

Belongs to the RuvB family. As to quaternary structure, homohexamer. Forms an RuvA(8)-RuvB(12)-Holliday junction (HJ) complex. HJ DNA is sandwiched between 2 RuvA tetramers; dsDNA enters through RuvA and exits via RuvB. An RuvB hexamer assembles on each DNA strand where it exits the tetramer. Each RuvB hexamer is contacted by two RuvA subunits (via domain III) on 2 adjacent RuvB subunits; this complex drives branch migration. In the full resolvosome a probable DNA-RuvA(4)-RuvB(12)-RuvC(2) complex forms which resolves the HJ.

It is found in the cytoplasm. It carries out the reaction ATP + H2O = ADP + phosphate + H(+). Its function is as follows. The RuvA-RuvB-RuvC complex processes Holliday junction (HJ) DNA during genetic recombination and DNA repair, while the RuvA-RuvB complex plays an important role in the rescue of blocked DNA replication forks via replication fork reversal (RFR). RuvA specifically binds to HJ cruciform DNA, conferring on it an open structure. The RuvB hexamer acts as an ATP-dependent pump, pulling dsDNA into and through the RuvAB complex. RuvB forms 2 homohexamers on either side of HJ DNA bound by 1 or 2 RuvA tetramers; 4 subunits per hexamer contact DNA at a time. Coordinated motions by a converter formed by DNA-disengaged RuvB subunits stimulates ATP hydrolysis and nucleotide exchange. Immobilization of the converter enables RuvB to convert the ATP-contained energy into a lever motion, pulling 2 nucleotides of DNA out of the RuvA tetramer per ATP hydrolyzed, thus driving DNA branch migration. The RuvB motors rotate together with the DNA substrate, which together with the progressing nucleotide cycle form the mechanistic basis for DNA recombination by continuous HJ branch migration. Branch migration allows RuvC to scan DNA until it finds its consensus sequence, where it cleaves and resolves cruciform DNA. This chain is Holliday junction branch migration complex subunit RuvB, found in Ehrlichia ruminantium (strain Gardel).